Reading from the N-terminus, the 651-residue chain is DNA endonuclease RBBP8 (651 aa).

2 coiled-coil regions span residues 35 to 84 and 117 to 138; these read LQEL…EDRL and ISELEAERKTLTDENRRLSLEL. Disordered regions lie at residues 138-199, 363-433, and 487-539; these read LERL…PESR, NGRL…EHQA, and YESC…SDKS. Residues 363–379 are compositionally biased toward polar residues; it reads NGRLQSKNQETSEIETT. Over residues 380–391 the composition is skewed to basic and acidic residues; the sequence is QDSKKKCLDGHT. The segment covering 503–515 has biased composition (acidic residues); sequence VYEEEREEDDPEE. Positions 525–539 are enriched in basic and acidic residues; it reads RPADRKPLVSDSDKS. Thr-599 and Thr-611 each carry phosphothreonine.

It belongs to the COM1/SAE2/CtIP family. As to quaternary structure, homotetramer; formed by antiparallel association of helical extensions protruding from the N-termini of two parallel coiled-coil dimers. Interacts with the MRN complex; the interaction links DNA sensing to resection. Interacts with samhd1. Phosphorylation at Thr-599 and Thr-611 promote interaction with nbn and recruitment to double-strand breaks (DSBs).

Its subcellular location is the nucleus. It localises to the chromosome. Endonuclease that cooperates with the MRE11-RAD50-NBN (MRN) complex in DNA-end resection, the first step of double-strand break (DSB) repair through the homologous recombination (HR) pathway. Functions downstream of the MRN complex and ATM, promotes ATR activation and its recruitment to DSBs in the S/G2 phase facilitating the generation of ssDNA. Specifically promotes the endonuclease activity of the MRN complex to clear DNA ends containing protein adducts: recruited to DSBs by nbn following phosphorylation, and promotes the endonuclease of mre11 to clear protein-DNA adducts and generate clean double-strand break ends. This chain is DNA endonuclease RBBP8 (rbbp8), found in Danio rerio (Zebrafish).